The following is a 1099-amino-acid chain: Inverted formin-2 (1099 aa).

Residues 1-330 (MSLTEGAHTK…RAVLLADDCQ (330 aa)) enclose the GBD/FH3 domain. Basic and acidic residues-rich tracts occupy residues 348 to 359 (SSKEKRKTDKCT) and 367 to 385 (QTDKPKEESCEGKTVKKDP). 3 disordered regions span residues 348–391 (SSKE…SGIP), 432–509 (PSPP…PTPP), and 1000–1019 (AEKRKQQIADEETKRQKGEN). Residues 426–569 (TCSSVLPSPP…GMLPPPPPLP (144 aa)) enclose the FH1 domain. A compositionally biased stretch (pro residues) spans 452–499 (PLPPPPPPLPGTELSPPPPGMVALSLPPPPPPLPGMGGMLPPPPPPLP). Residues 621–1009 (FLKVNKPTLK…AEKRKQQIAD (389 aa)) enclose the FH2 domain. A coiled-coil region spans residues 907–1019 (LKKLRDLQNK…EETKRQKGEN (113 aa)). The region spanning 1037-1052 (DDLLADIKKGFQLRKT) is the WH2 domain. Residues 1064 to 1085 (KTLSSETNRTDIQHVGKRPEVP) are disordered. The span at 1071-1083 (NRTDIQHVGKRPE) shows a compositional bias: basic and acidic residues.

This sequence belongs to the formin homology family.

The sequence is that of Inverted formin-2 (inf2) from Xenopus laevis (African clawed frog).